The chain runs to 1124 residues: Phytochrome type A (1124 aa).

Residues 1-19 (MSTTRPSQSSNNSGRSRNS) show a composition bias toward low complexity. Residues 1-21 (MSTTRPSQSSNNSGRSRNSAR) are disordered. Positions 218–401 (SMERLCDTMV…VFAIHVNKEI (184 aa)) constitute a GAF domain. A phytochromobilin-binding site is contributed by Cys323. PAS domains lie at 617-687 (VTSE…LQGE) and 750-821 (DYKA…VNFG). Residues 901–1120 (YMKRQIRNPL…ILSVELAAAH (220 aa)) enclose the Histidine kinase domain.

The protein belongs to the phytochrome family. Homodimer. Post-translationally, contains one covalently linked phytochromobilin chromophore.

Regulatory photoreceptor which exists in two forms that are reversibly interconvertible by light: the Pr form that absorbs maximally in the red region of the spectrum and the Pfr form that absorbs maximally in the far-red region. Photoconversion of Pr to Pfr induces an array of morphogenic responses, whereas reconversion of Pfr to Pr cancels the induction of those responses. Pfr controls the expression of a number of nuclear genes including those encoding the small subunit of ribulose-bisphosphate carboxylase, chlorophyll A/B binding protein, protochlorophyllide reductase, rRNA, etc. It also controls the expression of its own gene(s) in a negative feedback fashion. This chain is Phytochrome type A (PHYA), found in Lathyrus sativus (White vetchling).